Reading from the N-terminus, the 119-residue chain is Large ribosomal subunit protein bL20 (119 aa).

The protein belongs to the bacterial ribosomal protein bL20 family.

Its function is as follows. Binds directly to 23S ribosomal RNA and is necessary for the in vitro assembly process of the 50S ribosomal subunit. It is not involved in the protein synthesizing functions of that subunit. This is Large ribosomal subunit protein bL20 from Granulibacter bethesdensis (strain ATCC BAA-1260 / CGDNIH1).